A 141-amino-acid chain; its full sequence is Lutropin subunit beta (141 aa).

Residues 1–21 (MERYQELTVLLLLLLLEGGSG) form the signal peptide. 6 cysteine pairs are disulfide-bonded: cysteine 30-cysteine 78, cysteine 44-cysteine 93, cysteine 47-cysteine 131, cysteine 55-cysteine 109, cysteine 59-cysteine 111, and cysteine 114-cysteine 121. N-linked (GlcNAc...) asparagine glycosylation occurs at asparagine 34.

The protein belongs to the glycoprotein hormones subunit beta family. In terms of assembly, heterodimer of a common alpha chain and a unique beta chain which confers biological specificity to thyrotropin, lutropin, follitropin and gonadotropin.

The protein localises to the secreted. Its function is as follows. Promotes spermatogenesis and ovulation by stimulating the testes and ovaries to synthesize steroids. This chain is Lutropin subunit beta (LHB), found in Monodelphis domestica (Gray short-tailed opossum).